The chain runs to 469 residues: Glutamate--tRNA ligase 2 (469 aa).

The short motif at 8–18 (PSPTGFLHVGG) is the 'HIGH' region element. The 'KMSKS' region motif lies at 250–254 (KLSKR). K253 contributes to the ATP binding site.

The protein belongs to the class-I aminoacyl-tRNA synthetase family. Glutamate--tRNA ligase type 1 subfamily. Monomer.

Its subcellular location is the cytoplasm. It carries out the reaction tRNA(Glu) + L-glutamate + ATP = L-glutamyl-tRNA(Glu) + AMP + diphosphate. Its function is as follows. Catalyzes the attachment of glutamate to tRNA(Glu) in a two-step reaction: glutamate is first activated by ATP to form Glu-AMP and then transferred to the acceptor end of tRNA(Glu). This chain is Glutamate--tRNA ligase 2, found in Thermotoga sp. (strain RQ2).